The chain runs to 557 residues: Dihydroxy-acid dehydratase (557 aa).

Residue Cys-49 coordinates [2Fe-2S] cluster. Mg(2+) is bound at residue Asp-81. Cys-122 serves as a coordination point for [2Fe-2S] cluster. Positions 123 and 124 each coordinate Mg(2+). Lys-124 carries the N6-carboxylysine modification. Cys-194 serves as a coordination point for [2Fe-2S] cluster. Glu-446 contacts Mg(2+). Residue Ser-472 is the Proton acceptor of the active site.

It belongs to the IlvD/Edd family. As to quaternary structure, homodimer. It depends on [2Fe-2S] cluster as a cofactor. The cofactor is Mg(2+).

The enzyme catalyses (2R)-2,3-dihydroxy-3-methylbutanoate = 3-methyl-2-oxobutanoate + H2O. The catalysed reaction is (2R,3R)-2,3-dihydroxy-3-methylpentanoate = (S)-3-methyl-2-oxopentanoate + H2O. Its pathway is amino-acid biosynthesis; L-isoleucine biosynthesis; L-isoleucine from 2-oxobutanoate: step 3/4. It participates in amino-acid biosynthesis; L-valine biosynthesis; L-valine from pyruvate: step 3/4. In terms of biological role, functions in the biosynthesis of branched-chain amino acids. Catalyzes the dehydration of (2R,3R)-2,3-dihydroxy-3-methylpentanoate (2,3-dihydroxy-3-methylvalerate) into 2-oxo-3-methylpentanoate (2-oxo-3-methylvalerate) and of (2R)-2,3-dihydroxy-3-methylbutanoate (2,3-dihydroxyisovalerate) into 2-oxo-3-methylbutanoate (2-oxoisovalerate), the penultimate precursor to L-isoleucine and L-valine, respectively. This is Dihydroxy-acid dehydratase from Prochlorococcus marinus (strain AS9601).